Here is a 391-residue protein sequence, read N- to C-terminus: Elongation factor Tu (391 aa).

In terms of domain architecture, tr-type G spans 10–201 (KPHVNIGTIG…AVDEYIPTPA (192 aa)). The G1 stretch occupies residues 19 to 26 (GHVDHGKT). Residue 19-26 (GHVDHGKT) participates in GTP binding. Position 26 (threonine 26) interacts with Mg(2+). Residues 55-59 (GITIS) are G2. Residues 76-79 (DCPG) are G3. Residues 76–80 (DCPGH) and 131–134 (NKVD) contribute to the GTP site. The interval 131-134 (NKVD) is G4. Positions 169-171 (SAL) are G5.

Belongs to the TRAFAC class translation factor GTPase superfamily. Classic translation factor GTPase family. EF-Tu/EF-1A subfamily. In terms of assembly, monomer.

It localises to the cytoplasm. It catalyses the reaction GTP + H2O = GDP + phosphate + H(+). GTP hydrolase that promotes the GTP-dependent binding of aminoacyl-tRNA to the A-site of ribosomes during protein biosynthesis. The protein is Elongation factor Tu of Cereibacter sphaeroides (strain ATCC 17029 / ATH 2.4.9) (Rhodobacter sphaeroides).